Consider the following 142-residue polypeptide: MMNFRQRMGWIGVGLYLLASVAAVYYIFEISQTYNRLALAQVEKTSGAQAKWPGDASSSSPSSTSWIVTLKTRLLLLPFWVWATIFLLPYLQVFLFLYSCTRADPKTVGYCILPICLAVLCNRHQTFTKASNQISRLQLIDT.

2 consecutive transmembrane segments (helical) span residues 8–28 (MGWI…YYIF) and 76–96 (LLPF…VFLF).

It belongs to the LYSET family.

The protein localises to the golgi apparatus membrane. In terms of biological role, required for mannose-6-phosphate-dependent trafficking of lysosomal enzymes. LYSET bridges GlcNAc-1-phosphate transferase (GNPTAB), to the membrane-bound transcription factor site-1 protease (MBTPS1), thus allowing proteolytic activation of the GNPTAB. GNPTAB is involved in the regulation of M6P-dependent Golgi-to-lysosome trafficking of lysosomal enzymes. LYSET is thus an essential factor for maturation and delivery of lysosomal hydrolases. In Danio rerio (Zebrafish), this protein is Lysosomal enzyme trafficking factor (tmem251).